The sequence spans 615 residues: Dihydroxy-acid dehydratase (615 aa).

Asp-81 contributes to the Mg(2+) binding site. A [2Fe-2S] cluster-binding site is contributed by Cys-122. Mg(2+) is bound by residues Asp-123 and Lys-124. Lys-124 carries the post-translational modification N6-carboxylysine. A [2Fe-2S] cluster-binding site is contributed by Cys-193. Glu-489 is a binding site for Mg(2+). Ser-515 acts as the Proton acceptor in catalysis.

The protein belongs to the IlvD/Edd family. Homodimer. It depends on [2Fe-2S] cluster as a cofactor. Mg(2+) is required as a cofactor.

The enzyme catalyses (2R)-2,3-dihydroxy-3-methylbutanoate = 3-methyl-2-oxobutanoate + H2O. It carries out the reaction (2R,3R)-2,3-dihydroxy-3-methylpentanoate = (S)-3-methyl-2-oxopentanoate + H2O. The protein operates within amino-acid biosynthesis; L-isoleucine biosynthesis; L-isoleucine from 2-oxobutanoate: step 3/4. It functions in the pathway amino-acid biosynthesis; L-valine biosynthesis; L-valine from pyruvate: step 3/4. Functionally, functions in the biosynthesis of branched-chain amino acids. Catalyzes the dehydration of (2R,3R)-2,3-dihydroxy-3-methylpentanoate (2,3-dihydroxy-3-methylvalerate) into 2-oxo-3-methylpentanoate (2-oxo-3-methylvalerate) and of (2R)-2,3-dihydroxy-3-methylbutanoate (2,3-dihydroxyisovalerate) into 2-oxo-3-methylbutanoate (2-oxoisovalerate), the penultimate precursor to L-isoleucine and L-valine, respectively. The chain is Dihydroxy-acid dehydratase from Pseudomonas syringae pv. syringae (strain B728a).